The chain runs to 689 residues: tRNA wybutosine-synthesizing protein 4 (689 aa).

The interval 1 to 33 is disordered; that stretch reads MTSTSKLDANQLARQRKKLEKDRRKKVYDDQQV. Positions 14–26 are enriched in basic residues; that stretch reads RQRKKLEKDRRKK. S-adenosyl-L-methionine contacts are provided by residues R84, G111, D137, 183 to 184, and E215; that span reads DL.

Belongs to the methyltransferase superfamily. LCMT family.

It catalyses the reaction 7-[(3S)-3-amino-3-carboxypropyl]wyosine(37) in tRNA(Phe) + S-adenosyl-L-methionine = 7-[(3S)-(3-amino-3-methoxycarbonyl)propyl]wyosine(37) in tRNA(Phe) + S-adenosyl-L-homocysteine. The enzyme catalyses 7-[(3S)-(3-amino-3-methoxycarbonyl)propyl]wyosine(37) in tRNA(Phe) + S-adenosyl-L-methionine + CO2 = wybutosine(37) in tRNA(Phe) + S-adenosyl-L-homocysteine + 2 H(+). Its pathway is tRNA modification; wybutosine-tRNA(Phe) biosynthesis. Its function is as follows. Probable S-adenosyl-L-methionine-dependent methyltransferase that acts as a component of the wybutosine biosynthesis pathway. Wybutosine is a hyper modified guanosine with a tricyclic base found at the 3'-position adjacent to the anticodon of eukaryotic phenylalanine tRNA. May methylate the carboxyl group of leucine residues to form alpha-leucine ester residues. The sequence is that of tRNA wybutosine-synthesizing protein 4 (PPM2) from Candida albicans (strain SC5314 / ATCC MYA-2876) (Yeast).